Here is a 628-residue protein sequence, read N- to C-terminus: Probable potassium transport system protein Kup (628 aa).

The next 12 membrane-spanning stretches (helical) occupy residues 15–35 (FAAE…SPLY), 49–69 (FLGG…ILSV), 106–126 (WYLL…GVLT), 141–161 (ISPE…LAVF), 174–194 (FFGP…VYGI), 210–230 (IMLM…CFLA), 254–274 (LFVA…ILLV), 295–315 (LLFL…TGVF), 343–363 (IYVG…VLGF), 369–389 (LASA…ILFI), 398–418 (WPAP…FAFA), and 425–445 (IHDG…VMVS).

The protein belongs to the HAK/KUP transporter (TC 2.A.72) family.

The protein resides in the cell inner membrane. The catalysed reaction is K(+)(in) + H(+)(in) = K(+)(out) + H(+)(out). In terms of biological role, transport of potassium into the cell. Likely operates as a K(+):H(+) symporter. This is Probable potassium transport system protein Kup from Xanthobacter autotrophicus (strain ATCC BAA-1158 / Py2).